The sequence spans 97 residues: Small ribosomal subunit protein bS20 (97 aa).

This sequence belongs to the bacterial ribosomal protein bS20 family.

Its function is as follows. Binds directly to 16S ribosomal RNA. The chain is Small ribosomal subunit protein bS20 from Prochlorococcus marinus subsp. pastoris (strain CCMP1986 / NIES-2087 / MED4).